Reading from the N-terminus, the 602-residue chain is Aspartate--tRNA(Asp/Asn) ligase (602 aa).

Glutamate 175 contacts L-aspartate. Positions 199-202 (QIFK) are aspartate. Arginine 221 provides a ligand contact to L-aspartate. ATP-binding positions include 221-223 (RDE) and glutamine 230. Position 458 (histidine 458) interacts with L-aspartate. Glutamate 492 lines the ATP pocket. L-aspartate is bound at residue arginine 499. ATP is bound at residue 544-547 (GLDR).

Belongs to the class-II aminoacyl-tRNA synthetase family. Type 1 subfamily. Homodimer.

The protein localises to the cytoplasm. The enzyme catalyses tRNA(Asx) + L-aspartate + ATP = L-aspartyl-tRNA(Asx) + AMP + diphosphate. Functionally, aspartyl-tRNA synthetase with relaxed tRNA specificity since it is able to aspartylate not only its cognate tRNA(Asp) but also tRNA(Asn). Reaction proceeds in two steps: L-aspartate is first activated by ATP to form Asp-AMP and then transferred to the acceptor end of tRNA(Asp/Asn). The sequence is that of Aspartate--tRNA(Asp/Asn) ligase from Cupriavidus necator (strain ATCC 17699 / DSM 428 / KCTC 22496 / NCIMB 10442 / H16 / Stanier 337) (Ralstonia eutropha).